The sequence spans 158 residues: Superoxide dismutase [Cu-Zn] (158 aa).

Residues H46, H48, and H63 each contribute to the Cu cation site. The cysteines at positions 57 and 149 are disulfide-linked. Zn(2+)-binding residues include H63, H71, H80, and D83. Cu cation is bound at residue H120.

The protein belongs to the Cu-Zn superoxide dismutase family. Homodimer. The cofactor is Cu cation. Requires Zn(2+) as cofactor.

Its subcellular location is the cytoplasm. It catalyses the reaction 2 superoxide + 2 H(+) = H2O2 + O2. Functionally, destroys radicals which are normally produced within the cells and which are toxic to biological systems. This Onchocerca volvulus protein is Superoxide dismutase [Cu-Zn] (sod-1).